A 664-amino-acid chain; its full sequence is Sodium/glucose cotransporter 1 (664 aa).

Topologically, residues 1–24 (MDSSTWSPPATATAEPLQAYERIR) are extracellular. Residues 25-47 (NAADISVIVIYFVVVMAVGLWAM) traverse the membrane as a helical segment. At 48–66 (FSTNRGTVGGFFLAGRSMV) the chain is on the cytoplasmic side. Residues 67 to 90 (WWPIGASLFASNIGSGHFVGLAGT) traverse the membrane as a helical segment. The Extracellular portion of the chain corresponds to 91–95 (GAAAG). The chain crosses the membrane as a helical span at residues 96–117 (IATGGFEWNALILVVLLGWVFV). The Cytoplasmic segment spans residues 118–139 (PIYIKAGVVTMPEYLRKRFGGQ). Residues 140–169 (RIQVYLSVLSLVLYIFTKISADIFSGAIFI) form a helical membrane-spanning segment. Over 170-176 (NLALGLD) the chain is Extracellular. A helical membrane pass occupies residues 177–193 (LYLAIFILLAITALYTI). Residues 194–202 (TGGLAAVIY) are Cytoplasmic-facing. A helical membrane pass occupies residues 203–221 (TDTLQTVIMLLGSFILTGF). Residues 222-275 (AFHEVGGYSAFVTKYMNAIPTVTSYGNTTVKKECYTPRADSFHIFRDPLKGDLP) lie on the Extracellular side of the membrane. An N-linked (GlcNAc...) asparagine glycan is attached at Asn-248. Intrachain disulfides connect Cys-255-Cys-511, Cys-255-Cys-610, Cys-345-Cys-351, Cys-355-Cys-361, and Cys-517-Cys-522. A helical transmembrane segment spans residues 276–295 (WPGLIFGLTIISLWYWCTDQ). At 296-309 (VIVQRCLSAKNMSH) the chain is on the cytoplasmic side. Residues 310-331 (VKAGCIMCGYMKLLPMFLMVMP) form a helical membrane-spanning segment. At 332–375 (GMISRILFTEKVACTVPSECEKYCGTKVGCTNIAYPTLVVELMP) the chain is on the extracellular side. The helical transmembrane segment at 376–406 (NGLRGLMLSVMLASLMSSLTSIFNSASTLFT) threads the bilayer. Residues 407–422 (MDIYTKIRKKASEKEL) are Cytoplasmic-facing. Residues 423–444 (MIAGRLFMLVLIGVSIAWVPIV) form a helical membrane-spanning segment. Topologically, residues 445 to 451 (QSAQSGQ) are extracellular. A helical transmembrane segment spans residues 452-477 (LFDYIQSITSYLGPPIAAVFLLAIFC). Gln-457 contacts D-glucose. At 478-481 (KRVN) the chain is on the cytoplasmic side. A helical membrane pass occupies residues 482-504 (EPGAFWGLIIGFLIGVSRMITEF). Over 505–525 (AYGTGSCMEPSNCPTIICGVH) the chain is Extracellular. Residues 526-547 (YLYFAIILFVITIIVILAISLF) form a helical membrane-spanning segment. Topologically, residues 548 to 644 (TKPIADVHLY…TSEKRLWRMV (97 aa)) are cytoplasmic. Residues 645 to 662 (VNINGIILLAVAVFCHAY) form a helical membrane-spanning segment. The Extracellular portion of the chain corresponds to 663 to 664 (FA).

It belongs to the sodium:solute symporter (SSF) (TC 2.A.21) family. In terms of processing, N-glycosylation is not necessary for the cotransporter function.

It localises to the apical cell membrane. It catalyses the reaction D-glucose(out) + 2 Na(+)(out) = D-glucose(in) + 2 Na(+)(in). The catalysed reaction is D-galactose(out) + 2 Na(+)(out) = D-galactose(in) + 2 Na(+)(in). Enhanced by the interaction with PDZK1IP1/MAP17; but unlike SLC5A2/SGLT2, PDZK1IP1 is not essential for SLC5A1 transporter activity. Possibly modulated by cholesterol binding. Its function is as follows. Electrogenic Na(+)-coupled sugar symporter that actively transports D-glucose or D-galactose at the plasma membrane, with a Na(+) to sugar coupling ratio of 2:1. Transporter activity is driven by a transmembrane Na(+) electrochemical gradient set by the Na(+)/K(+) pump. Has a primary role in the transport of dietary monosaccharides from enterocytes to blood. Responsible for the absorption of D-glucose or D-galactose across the apical brush-border membrane of enterocytes, whereas basolateral exit is provided by GLUT2. Additionally, functions as a D-glucose sensor in enteroendocrine cells, triggering the secretion of the incretins GCG and GIP that control food intake and energy homeostasis. Together with SGLT2, functions in reabsorption of D-glucose from glomerular filtrate, playing a nonredundant role in the S3 segment of the proximal tubules. Transports D-glucose into endometrial epithelial cells, controlling glycogen synthesis and nutritional support for the embryo as well as the decidual transformation of endometrium prior to conception. Acts as a water channel enabling passive water transport in response to the osmotic gradient created upon sugar and Na(+) uptake. Has high water conductivity comparable to aquaporins and therefore is expected to play an important role in transepithelial water permeability, especially in the small intestine. The sequence is that of Sodium/glucose cotransporter 1 (SLC5A1) from Ovis aries (Sheep).